Consider the following 333-residue polypeptide: Galactinol synthase 5 (333 aa).

Residue K103 is part of the active site. Residues D119, D121, and H257 each contribute to the Mn(2+) site.

The protein belongs to the glycosyltransferase 8 family. Galactosyltransferase subfamily. A divalent metal cation is required as a cofactor.

The protein localises to the cytoplasm. The catalysed reaction is myo-inositol + UDP-alpha-D-galactose = alpha-D-galactosyl-(1-&gt;3)-1D-myo-inositol + UDP + H(+). Galactinol synthase involved in the biosynthesis of raffinose family oligosaccharides (RFOs) that function as osmoprotectants. May promote plant stress tolerance. In Arabidopsis thaliana (Mouse-ear cress), this protein is Galactinol synthase 5 (GOLS5).